Consider the following 387-residue polypeptide: Phosphoglycerate kinase (387 aa).

Substrate is bound by residues 21–23 (DLN), Arg36, 59–62 (HLGR), Arg113, and Arg146. ATP-binding positions include Lys197, Glu314, and 340 to 343 (GGDT).

Belongs to the phosphoglycerate kinase family. As to quaternary structure, monomer.

The protein localises to the cytoplasm. The enzyme catalyses (2R)-3-phosphoglycerate + ATP = (2R)-3-phospho-glyceroyl phosphate + ADP. It participates in carbohydrate degradation; glycolysis; pyruvate from D-glyceraldehyde 3-phosphate: step 2/5. The sequence is that of Phosphoglycerate kinase from Photorhabdus laumondii subsp. laumondii (strain DSM 15139 / CIP 105565 / TT01) (Photorhabdus luminescens subsp. laumondii).